The sequence spans 506 residues: Maturase K (506 aa).

It belongs to the intron maturase 2 family. MatK subfamily.

Its subcellular location is the plastid. The protein resides in the chloroplast. Functionally, usually encoded in the trnK tRNA gene intron. Probably assists in splicing its own and other chloroplast group II introns. The protein is Maturase K of Medicago sativa (Alfalfa).